We begin with the raw amino-acid sequence, 306 residues long: Acetaldehyde dehydrogenase 2/3 (306 aa).

Catalysis depends on cysteine 130, which acts as the Acyl-thioester intermediate. NAD(+)-binding positions include 161–169 and asparagine 272; that span reads SAGPGTRKN.

Belongs to the acetaldehyde dehydrogenase family.

It carries out the reaction acetaldehyde + NAD(+) + CoA = acetyl-CoA + NADH + H(+). This is Acetaldehyde dehydrogenase 2/3 (mhpF) from Azoarcus sp. (strain BH72).